The primary structure comprises 255 residues: Ribonuclease HII (255 aa).

One can recognise an RNase H type-2 domain in the interval 72 to 255; the sequence is RLIAGIDEVG…RTFAPIKDMI (184 aa). Residues Asp78, Glu79, and Asp170 each contribute to the a divalent metal cation site.

This sequence belongs to the RNase HII family. It depends on Mn(2+) as a cofactor. Requires Mg(2+) as cofactor.

The protein resides in the cytoplasm. It catalyses the reaction Endonucleolytic cleavage to 5'-phosphomonoester.. Endonuclease that specifically degrades the RNA of RNA-DNA hybrids. This is Ribonuclease HII from Enterococcus faecalis (strain ATCC 700802 / V583).